Reading from the N-terminus, the 99-residue chain is Putative transmembrane protein ORF13 (99 aa).

3 helical membrane-spanning segments follow: residues 8-28 (IATF…MAGI), 42-62 (LGLF…YIIV), and 73-93 (GPIT…AIIA).

It localises to the host membrane. This His1 virus (isolate Australia/Victoria) (His1V) protein is Putative transmembrane protein ORF13.